A 185-amino-acid polypeptide reads, in one-letter code: Ribosome-recycling factor (185 aa).

The protein belongs to the RRF family.

The protein localises to the cytoplasm. Functionally, responsible for the release of ribosomes from messenger RNA at the termination of protein biosynthesis. May increase the efficiency of translation by recycling ribosomes from one round of translation to another. This is Ribosome-recycling factor from Shewanella sp. (strain MR-4).